Consider the following 259-residue polypeptide: MMQKQNMIVVNQKEIAKNIYELVLQGTLVQQMNEPGQFVHIKVAEGIAPLLRRPISICNVDQEKNEFTMLYRAEGQGTKTLATRKQGEMVDVLGPLGHGFPVEEAEAGQTALLVGGGIGVPPLYELSQRLVAKGVRVIHILGFQTKDVVFYEEKFAELGDTYVATVDGTHGTKGFVTDVIDNYGIDFDILYSCGPLAMLRALEGRYKEKKAYISLEERMGCGIGACFACVCHLQEDPSGHSYKKVCSDGPVFPIGEVVL.

The region spanning 2 to 102 (MQKQNMIVVN…LGPLGHGFPV (101 aa)) is the FAD-binding FR-type domain. FAD is bound by residues 53 to 56 (RPIS), 70 to 72 (LYR), and 77 to 78 (GT). Residues Cys-221, Cys-226, Cys-229, and Cys-246 each contribute to the [2Fe-2S] cluster site.

Belongs to the PyrK family. In terms of assembly, heterotetramer of 2 PyrK and 2 PyrD type B subunits. [2Fe-2S] cluster serves as cofactor. Requires FAD as cofactor.

It participates in pyrimidine metabolism; UMP biosynthesis via de novo pathway; orotate from (S)-dihydroorotate (NAD(+) route): step 1/1. Functionally, responsible for channeling the electrons from the oxidation of dihydroorotate from the FMN redox center in the PyrD type B subunit to the ultimate electron acceptor NAD(+). This is Dihydroorotate dehydrogenase B (NAD(+)), electron transfer subunit from Bacillus cereus (strain ATCC 14579 / DSM 31 / CCUG 7414 / JCM 2152 / NBRC 15305 / NCIMB 9373 / NCTC 2599 / NRRL B-3711).